The primary structure comprises 191 residues: GDP-mannose pyrophosphatase (191 aa).

GDP-alpha-D-mannose contacts are provided by residues Tyr-17, 38–40 (KRE), Arg-67, and 85–87 (AGL). A Nudix hydrolase domain is found at 43-180 (DRGNGATILL…EIRDGKTVLL (138 aa)). Mg(2+) contacts are provided by Ala-85, Glu-100, and Glu-104. The short motif at 86-106 (GLLDNDEPEVCIRKEAIEETG) is the Nudix box element. Residues Glu-104, Glu-127, 150-151 (DE), and Lys-176 each bind GDP-alpha-D-mannose. A Mg(2+)-binding site is contributed by Glu-151.

The protein belongs to the Nudix hydrolase family. NudK subfamily. As to quaternary structure, homodimer. The cofactor is Mg(2+).

The enzyme catalyses GDP-alpha-D-mannose + H2O = alpha-D-mannose 1-phosphate + GMP + 2 H(+). Its function is as follows. Nucleoside diphosphate sugar hydrolase that hydrolyzes GDP-mannose as its preferred substrate, yielding GMP and mannose-1-phosphate. In Salmonella choleraesuis (strain SC-B67), this protein is GDP-mannose pyrophosphatase (nudK).